The chain runs to 799 residues: ATP-dependent RNA helicase DBP7 (799 aa).

Disordered stretches follow at residues 34–177 and 201–229; these read KALR…RRIR and DRIA…NAAL. 5 stretches are compositionally biased toward basic and acidic residues: residues 35–49, 56–66, 73–100, 114–132, and 139–172; these read ALRE…KKEQ, IEDRMKRREQD, KPYD…KSYD, EKYQ…ERWV, and NRRD…DGSL. The segment covering 208–220 has biased composition (acidic residues); that stretch reads VQMEDEEEEEAEN. The Q motif motif lies at 233 to 261; sequence TTFSGLGCSQRLVDALVGMQLAKPTKIQR. Positions 265–465 constitute a Helicase ATP-binding domain; sequence PRLIQRERDL…KSTLKDADWV (201 aa). Residues 278–285 and 306–313 contribute to the ATP site; these read AQTGSGKT and TGLFAVIL. Residues 391–394 carry the DEAD box motif; the sequence is DEGD. Residues 511–679 enclose the Helicase C-terminal domain; sequence DILQSSEKTN…NILAAGFGGK (169 aa). A disordered region spans residues 750 to 799; it reads KLGKKKDPEKIKVNKDGSLDETQARKKMLDRSRKHVYNSGESAMGGYVLE. Positions 754-780 are enriched in basic and acidic residues; it reads KKDPEKIKVNKDGSLDETQARKKMLDR.

The protein belongs to the DEAD box helicase family. DDX31/DBP7 subfamily.

Its subcellular location is the nucleus. The protein localises to the nucleolus. It carries out the reaction ATP + H2O = ADP + phosphate + H(+). Its function is as follows. ATP-binding RNA helicase involved in the biogenesis of 60S ribosomal subunits and is required for the normal formation of 25S and 5.8S rRNAs. In Yarrowia lipolytica (strain CLIB 122 / E 150) (Yeast), this protein is ATP-dependent RNA helicase DBP7 (DBP7).